The chain runs to 248 residues: Ankyrin repeat domain-containing protein 45 (248 aa).

2 stretches are compositionally biased toward acidic residues: residues methionine 1 to glutamate 10 and glutamate 22 to glycine 33. A disordered region spans residues methionine 1–threonine 42. 2 ANK repeats span residues valine 75–glutamate 104 and arginine 108–alanine 137.

The protein localises to the cytoplasm. It is found in the midbody. The protein resides in the midbody ring. Its subcellular location is the cleavage furrow. May play a role during cell division. The sequence is that of Ankyrin repeat domain-containing protein 45 (Ankrd45) from Mus musculus (Mouse).